A 132-amino-acid chain; its full sequence is Small ribosomal subunit protein uS8 (132 aa).

This sequence belongs to the universal ribosomal protein uS8 family. In terms of assembly, part of the 30S ribosomal subunit. Contacts proteins S5 and S12.

Its function is as follows. One of the primary rRNA binding proteins, it binds directly to 16S rRNA central domain where it helps coordinate assembly of the platform of the 30S subunit. The chain is Small ribosomal subunit protein uS8 from Geobacter sulfurreducens (strain ATCC 51573 / DSM 12127 / PCA).